The sequence spans 324 residues: Probable UDP-sugar transporter protein SLC35A4 (324 aa).

Residues 1–18 (MSVEDGGMPGLSRPRQAR) lie on the Cytoplasmic side of the membrane. A helical membrane pass occupies residues 19-39 (WTLMLLLSTAMYGAHAPLLAL). At 40 to 52 (CHVDGRVPFRPSS) the chain is on the lumenal side. A helical membrane pass occupies residues 53–73 (AVLLTELTKLLLCAFSLLVGW). The Cytoplasmic segment spans residues 74–85 (QAWPQGAPPWRQ). The chain crosses the membrane as a helical span at residues 86-106 (AAPFALSALLYGANNNLVIYL). The Lumenal portion of the chain corresponds to 107–142 (QRYMDPSTYQVLSNLKIGSTAVLYCLCLRHRLSVRQ). The chain crosses the membrane as a helical span at residues 143–163 (GLALLLLMAAGACYAAGGLQV). Over 164-180 (PGNTLPRPPPAAAASPM) the chain is Cytoplasmic. A helical membrane pass occupies residues 181 to 201 (PLHITPLGLLLLILYCLISGL). Residues 202 to 214 (SSVYTELLMKRQQ) lie on the Lumenal side of the membrane. A helical membrane pass occupies residues 215–235 (LPLALQNLFLYTFGVLLNLGL). Residues 236–250 (HAGGGPGPGLLEGFS) are Cytoplasmic-facing. A helical transmembrane segment spans residues 251–271 (GWAALVVLSQALNGLLMSVVM). Over 272–275 (KHGS) the chain is Lumenal. The helical transmembrane segment at 276–298 (SITRLFVVSCSLVVNAVLSAVLL) threads the bilayer. The Cytoplasmic segment spans residues 299 to 324 (RLQLTAAFFLATLLIGLAMRLYYGSR).

The protein belongs to the nucleotide-sugar transporter family. SLC35A subfamily. As to quaternary structure, found in a complex with SLC35A2 and SLC35A3.

It localises to the golgi apparatus membrane. It catalyses the reaction CDP-L-ribitol(in) + CDP(out) = CDP-L-ribitol(out) + CDP(in). Its function is as follows. Mediates the transport of CDP-ribitol. Does not exhibit CMP-sialic acid, UDP-galactose and UDP-N-acetylglucosamine transport activity. This chain is Probable UDP-sugar transporter protein SLC35A4, found in Pongo abelii (Sumatran orangutan).